A 587-amino-acid polypeptide reads, in one-letter code: Lipoprotein LpqB (587 aa).

A signal peptide spans Met-1–Gly-19. The N-palmitoyl cysteine moiety is linked to residue Cys-20. The S-diacylglycerol cysteine moiety is linked to residue Cys-20.

Belongs to the LpqB lipoprotein family.

It is found in the cell membrane. In Mycobacterium bovis (strain ATCC BAA-935 / AF2122/97), this protein is Lipoprotein LpqB.